The primary structure comprises 575 residues: Protein AUXIN SIGNALING F-BOX 2 (575 aa).

In terms of domain architecture, F-box spans 1 to 47 (MNYFPDEVIEHVFDFVTSHKDRNAISLVCKSWYKIERYSRQKVFIGN). Residue K69 coordinates 1D-myo-inositol hexakisphosphate. The interaction with auxin-responsive proteins stretch occupies residues 76–77 (DF). 1D-myo-inositol hexakisphosphate is bound by residues 108–109 (KR) and R340. An interaction with auxin-responsive proteins region spans residues 343 to 348 (PSDLLG). Residue 396 to 398 (RFR) coordinates 1D-myo-inositol hexakisphosphate. The tract at residues 400–404 (CILEP) is interaction with auxin-responsive proteins. R431 is a 1D-myo-inositol hexakisphosphate binding site. The segment at 459–460 (AF) is interaction with auxin-responsive proteins. 1D-myo-inositol hexakisphosphate is bound by residues 479–480 (KK) and R504.

In terms of assembly, part of a SCF (SKP1-cullin-F-box) protein ligase complex. Interacts with Aux/IAA proteins (IAA7) in an auxin-dependent manner. As to expression, ubiquitous, with higher levels in seedlings.

It is found in the nucleus. It functions in the pathway protein modification; protein ubiquitination. Its function is as follows. Component of SCF(ASK-cullin-F-box) E3 ubiquitin ligase complexes, which may mediate the ubiquitination and subsequent proteasomal degradation of target proteins. Confers sensitivity to the virulent bacterial pathogen P.syringae. Auxin receptor that mediates Aux/IAA proteins proteasomal degradation and auxin-regulated transcription. Involved in embryogenesis regulation by auxin. The chain is Protein AUXIN SIGNALING F-BOX 2 (AFB2) from Arabidopsis thaliana (Mouse-ear cress).